The sequence spans 68 residues: MKNYEIAAMSRKELLEKIDELENRLADINFHKAIEPPQNPMVFRNSKRDIARMKTRLRQMELQESSNA.

Belongs to the universal ribosomal protein uL29 family.

The protein is Large ribosomal subunit protein uL29 of Chlorobaculum parvum (strain DSM 263 / NCIMB 8327) (Chlorobium vibrioforme subsp. thiosulfatophilum).